A 426-amino-acid chain; its full sequence is Dihydroorotase (426 aa).

Positions 55 and 57 each coordinate Zn(2+). Residues 57–59 (HLR) and asparagine 89 each bind substrate. Zn(2+) is bound by residues aspartate 147, histidine 174, histidine 233, and aspartate 306. Aspartate 306 is a catalytic residue. Substrate-binding positions include histidine 310 and 324–325 (FG).

This sequence belongs to the metallo-dependent hydrolases superfamily. DHOase family. Class I DHOase subfamily. Zn(2+) is required as a cofactor.

It catalyses the reaction (S)-dihydroorotate + H2O = N-carbamoyl-L-aspartate + H(+). The protein operates within pyrimidine metabolism; UMP biosynthesis via de novo pathway; (S)-dihydroorotate from bicarbonate: step 3/3. In terms of biological role, catalyzes the reversible cyclization of carbamoyl aspartate to dihydroorotate. The chain is Dihydroorotase from Thermus aquaticus.